We begin with the raw amino-acid sequence, 241 residues long: Ribonuclease 3 (241 aa).

The RNase III domain occupies 8–137 (LTLLKNRLGI…LLGAVYLDQG (130 aa)). Glu-50 contributes to the Mg(2+) binding site. The active site involves Asp-54. Mg(2+) is bound by residues Asp-123 and Glu-126. Residue Glu-126 is part of the active site. In terms of domain architecture, DRBM spans 164–233 (DYKTELQELV…AKKALMKSDL (70 aa)). The tract at residues 214–241 (RSKKEAEQQAAKKALMKSDLGSACNHKK) is disordered.

This sequence belongs to the ribonuclease III family. As to quaternary structure, homodimer. The cofactor is Mg(2+).

The protein localises to the cytoplasm. It carries out the reaction Endonucleolytic cleavage to 5'-phosphomonoester.. In terms of biological role, digests double-stranded RNA. Involved in the processing of primary rRNA transcript to yield the immediate precursors to the large and small rRNAs (23S and 16S). Processes some mRNAs, and tRNAs when they are encoded in the rRNA operon. Processes pre-crRNA and tracrRNA of type II CRISPR loci if present in the organism. The protein is Ribonuclease 3 of Pelotomaculum thermopropionicum (strain DSM 13744 / JCM 10971 / SI).